The chain runs to 336 residues: GTP 3',8-cyclase (336 aa).

Residues 16 to 241 form the Radical SAM core domain; that stretch reads AYRRTYYYLR…QSKGITDGPA (226 aa). Arg25 provides a ligand contact to GTP. Residues Cys32 and Cys36 each coordinate [4Fe-4S] cluster. Tyr38 is a binding site for S-adenosyl-L-methionine. Cys39 is a [4Fe-4S] cluster binding site. A GTP-binding site is contributed by Arg75. Gly79 provides a ligand contact to S-adenosyl-L-methionine. Position 106 (Thr106) interacts with GTP. An S-adenosyl-L-methionine-binding site is contributed by Ser130. Lys167 is a GTP binding site. Met201 lines the S-adenosyl-L-methionine pocket. Positions 264 and 267 each coordinate [4Fe-4S] cluster. 269 to 271 is a binding site for GTP; sequence RLR. Residue Cys281 coordinates [4Fe-4S] cluster.

This sequence belongs to the radical SAM superfamily. MoaA family. In terms of assembly, monomer and homodimer. Requires [4Fe-4S] cluster as cofactor.

It catalyses the reaction GTP + AH2 + S-adenosyl-L-methionine = (8S)-3',8-cyclo-7,8-dihydroguanosine 5'-triphosphate + 5'-deoxyadenosine + L-methionine + A + H(+). It participates in cofactor biosynthesis; molybdopterin biosynthesis. Catalyzes the cyclization of GTP to (8S)-3',8-cyclo-7,8-dihydroguanosine 5'-triphosphate. The sequence is that of GTP 3',8-cyclase from Actinobacillus succinogenes (strain ATCC 55618 / DSM 22257 / CCUG 43843 / 130Z).